Consider the following 282-residue polypeptide: Putative SWIB domain-containing protein 070L (282 aa).

Low complexity predominate over residues 1 to 16 (MFQTTPKQVKPTTVPK). Residues 1-21 (MFQTTPKQVKPTTVPKTGRKN) form a disordered region. In terms of domain architecture, SWIB/MDM2 spans 97–181 (GLEKPRMISE…QKYLKHCFDE (85 aa)). Residues 199 to 282 (TDDQTTAEEA…KVKKEHKIKK (84 aa)) are disordered. Over residues 262-275 (GKKDKENIPLEKVK) the composition is skewed to basic and acidic residues.

Belongs to the IIV-6 306R family.

The polypeptide is Putative SWIB domain-containing protein 070L (Invertebrate iridescent virus 3 (IIV-3)).